A 601-amino-acid chain; its full sequence is Elongation factor 4 (601 aa).

The region spanning 7–189 is the tr-type G domain; the sequence is RNIRNFSIIA…AIVHRIPPPK (183 aa). Residues 19–24 and 136–139 contribute to the GTP site; these read DHGKST and NKID.

It belongs to the TRAFAC class translation factor GTPase superfamily. Classic translation factor GTPase family. LepA subfamily.

The protein resides in the cell inner membrane. The enzyme catalyses GTP + H2O = GDP + phosphate + H(+). Required for accurate and efficient protein synthesis under certain stress conditions. May act as a fidelity factor of the translation reaction, by catalyzing a one-codon backward translocation of tRNAs on improperly translocated ribosomes. Back-translocation proceeds from a post-translocation (POST) complex to a pre-translocation (PRE) complex, thus giving elongation factor G a second chance to translocate the tRNAs correctly. Binds to ribosomes in a GTP-dependent manner. In Xanthomonas axonopodis pv. citri (strain 306), this protein is Elongation factor 4.